The primary structure comprises 424 residues: Enolase (424 aa).

Gln162 contributes to the (2R)-2-phosphoglycerate binding site. Glu204 serves as the catalytic Proton donor. Mg(2+)-binding residues include Asp241, Glu284, and Asp311. (2R)-2-phosphoglycerate-binding residues include Lys336, Arg365, Ser366, and Lys387. Residue Lys336 is the Proton acceptor of the active site.

The protein belongs to the enolase family. It depends on Mg(2+) as a cofactor.

The protein localises to the cytoplasm. It localises to the secreted. The protein resides in the cell surface. The enzyme catalyses (2R)-2-phosphoglycerate = phosphoenolpyruvate + H2O. Its pathway is carbohydrate degradation; glycolysis; pyruvate from D-glyceraldehyde 3-phosphate: step 4/5. Catalyzes the reversible conversion of 2-phosphoglycerate (2-PG) into phosphoenolpyruvate (PEP). It is essential for the degradation of carbohydrates via glycolysis. This is Enolase from Chelativorans sp. (strain BNC1).